The primary structure comprises 261 residues: Ribonuclease PH (261 aa).

Residues arginine 88 and 126–128 (GTR) contribute to the phosphate site. Residues 242–261 (PYPGVLPEPKNPEPKKKFGA) form a disordered region. Over residues 251–261 (KNPEPKKKFGA) the composition is skewed to basic and acidic residues.

This sequence belongs to the RNase PH family. In terms of assembly, homohexameric ring arranged as a trimer of dimers.

The catalysed reaction is tRNA(n+1) + phosphate = tRNA(n) + a ribonucleoside 5'-diphosphate. In terms of biological role, phosphorolytic 3'-5' exoribonuclease that plays an important role in tRNA 3'-end maturation. Removes nucleotide residues following the 3'-CCA terminus of tRNAs; can also add nucleotides to the ends of RNA molecules by using nucleoside diphosphates as substrates, but this may not be physiologically important. Probably plays a role in initiation of 16S rRNA degradation (leading to ribosome degradation) during starvation. The protein is Ribonuclease PH of Rhodococcus erythropolis (strain PR4 / NBRC 100887).